The chain runs to 77 residues: U8-hexatoxin-Mg1a (77 aa).

A signal peptide spans 1-22 (MKVFSFTIGLVVIISLFAFALA). Positions 23-43 (YDEETDLMKKLVEMERAIEQR) are excised as a propeptide. Intrachain disulfides connect cysteine 46/cysteine 60, cysteine 53/cysteine 65, and cysteine 59/cysteine 76.

As to expression, expressed by the venom gland.

The protein resides in the secreted. Functionally, intrathorax injection into crickets causes paralysis prolonged for more than 60 minutes, followed by recovery. The polypeptide is U8-hexatoxin-Mg1a (Macrothele gigas (Japanese funnel web spider)).